The chain runs to 328 residues: Tetraacyldisaccharide 4'-kinase (328 aa).

ATP is bound at residue 55-62 (TAGGNGKT).

It belongs to the LpxK family.

It catalyses the reaction a lipid A disaccharide + ATP = a lipid IVA + ADP + H(+). It participates in glycolipid biosynthesis; lipid IV(A) biosynthesis; lipid IV(A) from (3R)-3-hydroxytetradecanoyl-[acyl-carrier-protein] and UDP-N-acetyl-alpha-D-glucosamine: step 6/6. In terms of biological role, transfers the gamma-phosphate of ATP to the 4'-position of a tetraacyldisaccharide 1-phosphate intermediate (termed DS-1-P) to form tetraacyldisaccharide 1,4'-bis-phosphate (lipid IVA). The polypeptide is Tetraacyldisaccharide 4'-kinase (Shigella flexneri serotype 5b (strain 8401)).